Here is a 339-residue protein sequence, read N- to C-terminus: 7,8-didemethyl-8-hydroxy-5-deazariboflavin synthase (339 aa).

The 232-residue stretch at 25-256 folds into the Radical SAM core domain; that stretch reads ATYSPAYTIV…PDITIQIPPN (232 aa). [4Fe-4S] cluster contacts are provided by C39, C43, and C46.

This sequence belongs to the radical SAM superfamily. CofG family. In terms of assembly, consists of two subunits, CofG and CofH. The cofactor is [4Fe-4S] cluster.

The catalysed reaction is 5-amino-5-(4-hydroxybenzyl)-6-(D-ribitylimino)-5,6-dihydrouracil + S-adenosyl-L-methionine = 7,8-didemethyl-8-hydroxy-5-deazariboflavin + 5'-deoxyadenosine + L-methionine + NH4(+) + H(+). It participates in cofactor biosynthesis; coenzyme F0 biosynthesis. In terms of biological role, catalyzes the radical-mediated synthesis of 7,8-didemethyl-8-hydroxy-5-deazariboflavin from 5-amino-5-(4-hydroxybenzyl)-6-(D-ribitylimino)-5,6-dihydrouracil. The protein is 7,8-didemethyl-8-hydroxy-5-deazariboflavin synthase of Nostoc sp. (strain PCC 7120 / SAG 25.82 / UTEX 2576).